A 331-amino-acid polypeptide reads, in one-letter code: D-lactate dehydrogenase (331 aa).

Residues 156 to 157, aspartate 176, 206 to 207, 233 to 235, and aspartate 259 each bind NAD(+); these read RI, MP, and TAR. The active site involves arginine 235. Glutamate 264 is an active-site residue. Histidine 296 acts as the Proton donor in catalysis.

This sequence belongs to the D-isomer specific 2-hydroxyacid dehydrogenase family.

The enzyme catalyses (R)-lactate + NAD(+) = pyruvate + NADH + H(+). The sequence is that of D-lactate dehydrogenase (ldhD) from Treponema pallidum (strain Nichols).